The sequence spans 172 residues: MEEHLSVMYERLRQELPKLFLQSHDYSLYSLDVEFINEILNIRTKGRTWYILSLTLCRFLAWNYFSQLRLEVLQLTRHPENWTLQARWRLVGLPVHLLFLRFYKRDKDELYRTYDAYSTFYLNSSGLICRHRLDKLMPSHSPPTPVKKLLVGALVALGLSEPEPNLNLCSKP.

This is an uncharacterized protein from Macaca mulatta (Rhesus macaque).